Here is an 897-residue protein sequence, read N- to C-terminus: Ubiquitin carboxyl-terminal hydrolase 33 (897 aa).

The segment at 7-110 (NDCPHLECVG…KQLPNAAKAV (104 aa)) adopts a UBP-type zinc-finger fold. 12 residues coordinate Zn(2+): Cys9, His11, Cys31, Cys34, Cys44, Cys49, Cys54, His61, His65, His71, Cys84, and Cys87. The USP domain occupies 156 to 670 (TGLKNIGNTC…EAYVLFYKKS (515 aa)). Residue Cys165 is the Nucleophile of the active site. Disordered regions lie at residues 261–308 (LIPE…GPRV) and 343–420 (GSHG…HKKV). Polar residues predominate over residues 287-297 (DDFQSCESCGS). 2 stretches are compositionally biased toward basic and acidic residues: residues 299 to 308 (DRADNEGPRV) and 344 to 353 (SHGDLDKDVD). The segment covering 355-396 (TSDSRPIISSQGAIKAQGRTSDSEIQVSSTVRPQSPTGNEGI) has biased composition (polar residues). Residues 398–411 (SRLSSSPPKSSAWP) show a composition bias toward low complexity. Catalysis depends on His628, which acts as the Proton acceptor. 2 DUSP domains span residues 672 to 765 (DETQ…LYVC) and 773 to 876 (EKLE…RPSV). Positions 875-884 (SVSHQESETS) are enriched in low complexity. Residues 875–897 (SVSHQESETSQSEEKIEVETRTV) form a disordered region. Residues 886–897 (SEEKIEVETRTV) show a composition bias toward basic and acidic residues.

Belongs to the peptidase C19 family. USP20/USP33 subfamily.

The protein localises to the cytoplasm. It is found in the perinuclear region. It localises to the cytoskeleton. The protein resides in the microtubule organizing center. Its subcellular location is the centrosome. It carries out the reaction Thiol-dependent hydrolysis of ester, thioester, amide, peptide and isopeptide bonds formed by the C-terminal Gly of ubiquitin (a 76-residue protein attached to proteins as an intracellular targeting signal).. Its function is as follows. Deubiquitinating enzyme involved in various processes such as centrosome duplication, cellular migration and beta-2 adrenergic receptor/ADRB2 recycling. Involved in regulation of centrosome duplication by mediating deubiquitination of ccp110 in S and G2/M phase, leading to stabilize ccp110 during the period which centrioles duplicate and elongate. Involved in cell migration via its interaction with intracellular domain of robo1, leading to regulate the Slit signaling. Plays a role in commissural axon guidance cross the ventral midline of the neural tube in a Slit-dependent manner, possibly by mediating the deubiquitination of robo1. Acts as a regulator of G-protein coupled receptor (GPCR) signaling by mediating the deubiquitination of beta-arrestins (arrb1 and arrb2) and beta-2 adrenergic receptor (adrb2). Deubiquitinates dio2, thereby regulating thyroid hormone regulation. Mediates deubiquitination of both 'Lys-48'- and 'Lys-63'-linked polyubiquitin chains. The sequence is that of Ubiquitin carboxyl-terminal hydrolase 33 (usp33) from Danio rerio (Zebrafish).